Here is a 287-residue protein sequence, read N- to C-terminus: ATP synthase gamma chain (287 aa).

This sequence belongs to the ATPase gamma chain family. In terms of assembly, F-type ATPases have 2 components, CF(1) - the catalytic core - and CF(0) - the membrane proton channel. CF(1) has five subunits: alpha(3), beta(3), gamma(1), delta(1), epsilon(1). CF(0) has three main subunits: a, b and c.

Its subcellular location is the cell inner membrane. Its function is as follows. Produces ATP from ADP in the presence of a proton gradient across the membrane. The gamma chain is believed to be important in regulating ATPase activity and the flow of protons through the CF(0) complex. This Geobacter metallireducens (strain ATCC 53774 / DSM 7210 / GS-15) protein is ATP synthase gamma chain.